The following is a 142-amino-acid chain: Small heat shock protein IbpB (142 aa).

Positions 26 to 137 (SGESQSFPPY…PPQRIAINER (112 aa)) constitute a sHSP domain.

It belongs to the small heat shock protein (HSP20) family. As to quaternary structure, homodimer. Forms homomultimers of about 100-150 subunits at optimal growth temperatures. Conformation changes to oligomers at high temperatures or high ionic concentrations. The decrease in size of the multimers is accompanied by an increase in chaperone activity.

The protein localises to the cytoplasm. Its function is as follows. Associates with aggregated proteins, together with IbpA, to stabilize and protect them from irreversible denaturation and extensive proteolysis during heat shock and oxidative stress. Aggregated proteins bound to the IbpAB complex are more efficiently refolded and reactivated by the ATP-dependent chaperone systems ClpB and DnaK/DnaJ/GrpE. Its activity is ATP-independent. This is Small heat shock protein IbpB from Salmonella typhi.